Consider the following 199-residue polypeptide: Recombination protein RecR (199 aa).

The C4-type zinc-finger motif lies at 57–72; it reads CQSCRTFTEQSLCPIC. Residues 81-176 enclose the Toprim domain; that stretch reads GVICVVETPA…IISRIAHGVP (96 aa).

It belongs to the RecR family.

In terms of biological role, may play a role in DNA repair. It seems to be involved in an RecBC-independent recombinational process of DNA repair. It may act with RecF and RecO. The sequence is that of Recombination protein RecR from Shewanella denitrificans (strain OS217 / ATCC BAA-1090 / DSM 15013).